The following is a 639-amino-acid chain: tRNA uridine 5-carboxymethylaminomethyl modification enzyme MnmG (639 aa).

Position 15–20 (15–20 (GAGHAG)) interacts with FAD. 276-290 (GPRYCPSIEDKIVRF) serves as a coordination point for NAD(+).

It belongs to the MnmG family. In terms of assembly, homodimer. Heterotetramer of two MnmE and two MnmG subunits. The cofactor is FAD.

It localises to the cytoplasm. Functionally, NAD-binding protein involved in the addition of a carboxymethylaminomethyl (cmnm) group at the wobble position (U34) of certain tRNAs, forming tRNA-cmnm(5)s(2)U34. In Streptococcus gordonii (strain Challis / ATCC 35105 / BCRC 15272 / CH1 / DL1 / V288), this protein is tRNA uridine 5-carboxymethylaminomethyl modification enzyme MnmG.